The chain runs to 605 residues: MSWGTELWDQFDSLDKHTQWGIDFLERYAKFVKERIEIEQNYAKQLRNLVKKYCPKRSSKDEEPRFTSCIAFFNILNELNDYAGQREVVAEEMAHRVYGELMRYAHDLKTERKMHLQEGRKAQQYLDMCWKQMDNSKKKFERECREAEKAQQSYERLDNDTNATKADVEKAKQQLNLRTHMADENKNEYAAQLQNFNGEQHKHFYVVIPQIYKQLQEMDERRTIKLSECYRGFADSERKVIPIISKCLEGMILAAKSVDERRDSQMVVDSFKSGFEPPGDFPFEDYSQHIYRTVSDGTISASKQEGGKMDSKSTAGKAKGKLWLFGKKPKPQSPPLTPTSLFTSSPPNGSQFLTLSIEPVHYCMNEIKTGKPRIPSFRSLKRGWSMKMGPALEDFSHLPPEQRRKKLQQRIDELNRGLQKESDQKEALNKMKDVYEKNPQMGDPGSLQPKLAETMNNIDRLRMEIHKNEAWLSEVEGKTGVRGDRRHSSDINHLVTQGRESPEGSYTDDANQEVRGPPQQHGHHSEFDDEFEDDDPLPAIGHCKAIYPFDGHNEGTLAMKEGEVLYIIEEDKGDGWTRARRQNGEEGYVPTTYIDVTLEKNSKGS.

The F-BAR domain maps to 1–263 (MSWGTELWDQ…AAKSVDERRD (263 aa)). Positions 66–258 (FTSCIAFFNI…EGMILAAKSV (193 aa)) form a coiled coil. Residues 245–535 (SKCLEGMILA…EFDDEFEDDD (291 aa)) are interaction with CDC42. Position 295 is a phosphoserine (Ser-295). Residues 325 to 345 (FGKKPKPQSPPLTPTSLFTSS) are disordered. Positions 392-484 (LEDFSHLPPE…VEGKTGVRGD (93 aa)) form a coiled coil. The REM-1 domain maps to 397–474 (HLPPEQRRKK…IHKNEAWLSE (78 aa)). A compositionally biased stretch (basic and acidic residues) spans 480–490 (GVRGDRRHSSD). Residues 480-539 (GVRGDRRHSSDINHLVTQGRESPEGSYTDDANQEVRGPPQQHGHHSEFDDEFEDDDPLPA) form a disordered region. Phosphoserine is present on residues Ser-488, Ser-501, and Ser-505. The interval 522–605 (GHHSEFDDEF…VTLEKNSKGS (84 aa)) is interaction with DNM1. The span at 527–536 (FDDEFEDDDP) shows a compositional bias: acidic residues. One can recognise an SH3 domain in the interval 538–599 (PAIGHCKAIY…PTTYIDVTLE (62 aa)). The segment at 541–597 (GHCKAIYPFDGHNEGTLAMKEGEVLYIIEEDKGDGWTRARRQNGEEGYVPTTYIDVT) is interaction with DNM2 and WASL. Residues 541-605 (GHCKAIYPFD…VTLEKNSKGS (65 aa)) are interaction with DAAM1, DIAPH1 and DIAPH2.

It belongs to the FNBP1 family. As to quaternary structure, homodimerizes, the dimers can polymerize end-to-end to form filamentous structures. Interacts with GTP-bound CDC42. Interacts with DAAM1, DIAPH1, DIAPH2, DNM1, DNM2 and WASL/N-WASP. Interacts with ATG3. Interacts (via SH3 domain) with ABI1, WASF2, CDC42 and WIPF1. In terms of tissue distribution, isoform 1 is expressed in brain. Isoform 2 is expressed in brain, kidney and lung. Within the brain expression is seen in cortical neurons, hippocampal pyramidal neurons, hypothalamus and piriform cortex.

Its subcellular location is the cytoplasm. The protein resides in the cytoskeleton. It is found in the cell cortex. It localises to the cytoplasmic vesicle. The protein localises to the cell membrane. In terms of biological role, required to coordinate membrane tubulation with reorganization of the actin cytoskeleton during endocytosis. May bind to lipids such as phosphatidylinositol 4,5-bisphosphate and phosphatidylserine and promote membrane invagination and the formation of tubules. Also promotes CDC42-induced actin polymerization by activating the WASL-WASPIP complex, the predominant form of WASL/N-WASP in cells. Actin polymerization may promote the fission of membrane tubules to form endocytic vesicles. Essential for autophagy of intracellular bacterial pathogens. May negatively regulate neurite extension and axon branching in developing neurons. In Rattus norvegicus (Rat), this protein is Formin-binding protein 1-like (Fnbp1l).